An 85-amino-acid polypeptide reads, in one-letter code: Large ribosomal subunit protein bL27 (85 aa).

The protein belongs to the bacterial ribosomal protein bL27 family.

The chain is Large ribosomal subunit protein bL27 from Xylella fastidiosa (strain Temecula1 / ATCC 700964).